A 282-amino-acid polypeptide reads, in one-letter code: HTH-type transcriptional activator RhaR (282 aa).

The HTH araC/xylS-type domain occupies Asp179–Leu277. 2 DNA-binding regions (H-T-H motif) span residues Asp196–Thr217 and Ile244–Thr267.

As to quaternary structure, binds DNA as a dimer.

The protein localises to the cytoplasm. In terms of biological role, activates expression of the rhaSR operon in response to L-rhamnose. The protein is HTH-type transcriptional activator RhaR of Salmonella arizonae (strain ATCC BAA-731 / CDC346-86 / RSK2980).